The chain runs to 132 residues: Ribosome-binding factor A (132 aa).

The protein belongs to the RbfA family. Monomer. Binds 30S ribosomal subunits, but not 50S ribosomal subunits or 70S ribosomes.

Its subcellular location is the cytoplasm. Functionally, one of several proteins that assist in the late maturation steps of the functional core of the 30S ribosomal subunit. Associates with free 30S ribosomal subunits (but not with 30S subunits that are part of 70S ribosomes or polysomes). Required for efficient processing of 16S rRNA. May interact with the 5'-terminal helix region of 16S rRNA. This chain is Ribosome-binding factor A, found in Xanthomonas campestris pv. campestris (strain 8004).